Here is a 126-residue protein sequence, read N- to C-terminus: MAVPSELKYSKEHEWVKVEGNTVTIGITEYAQGELGDIVFVELPEVDDEINEGDTFGSVESVKTVSELYAPVSGKVVESNEELEDSPEFVNESPYEKAWMVKVELSDESQLDDLLSADQYKEMIGE.

The 83-residue stretch at Thr-22–Glu-104 folds into the Lipoyl-binding domain. Lys-63 carries the N6-lipoyllysine modification.

The protein belongs to the GcvH family. As to quaternary structure, the glycine cleavage system is composed of four proteins: P, T, L and H. Requires (R)-lipoate as cofactor.

The glycine cleavage system catalyzes the degradation of glycine. The H protein shuttles the methylamine group of glycine from the P protein to the T protein. Functionally, is also involved in protein lipoylation via its role as an octanoyl/lipoyl carrier protein intermediate. The protein is Glycine cleavage system H protein of Staphylococcus haemolyticus (strain JCSC1435).